The following is a 149-amino-acid chain: D-aminoacyl-tRNA deacylase (149 aa).

The short motif at 141–142 (GP) is the Gly-cisPro motif, important for rejection of L-amino acids element.

This sequence belongs to the DTD family. Homodimer.

It localises to the cytoplasm. The enzyme catalyses glycyl-tRNA(Ala) + H2O = tRNA(Ala) + glycine + H(+). It carries out the reaction a D-aminoacyl-tRNA + H2O = a tRNA + a D-alpha-amino acid + H(+). In terms of biological role, an aminoacyl-tRNA editing enzyme that deacylates mischarged D-aminoacyl-tRNAs. Also deacylates mischarged glycyl-tRNA(Ala), protecting cells against glycine mischarging by AlaRS. Acts via tRNA-based rather than protein-based catalysis; rejects L-amino acids rather than detecting D-amino acids in the active site. By recycling D-aminoacyl-tRNA to D-amino acids and free tRNA molecules, this enzyme counteracts the toxicity associated with the formation of D-aminoacyl-tRNA entities in vivo and helps enforce protein L-homochirality. The chain is D-aminoacyl-tRNA deacylase from Streptomyces griseus subsp. griseus (strain JCM 4626 / CBS 651.72 / NBRC 13350 / KCC S-0626 / ISP 5235).